We begin with the raw amino-acid sequence, 192 residues long: Phosphoheptose isomerase (192 aa).

The region spanning 37–192 (LADSFKAGGK…IQLIEKEMVK (156 aa)) is the SIS domain. 52 to 54 (NGG) contacts substrate. Zn(2+)-binding residues include His61 and Glu65. Residues Glu65, 93–94 (ND), 119–121 (STS), Ser124, and Gln172 contribute to the substrate site. Residues Gln172 and His180 each coordinate Zn(2+).

This sequence belongs to the SIS family. GmhA subfamily. In terms of assembly, homotetramer. Zn(2+) is required as a cofactor.

The protein localises to the cytoplasm. The catalysed reaction is 2 D-sedoheptulose 7-phosphate = D-glycero-alpha-D-manno-heptose 7-phosphate + D-glycero-beta-D-manno-heptose 7-phosphate. The protein operates within carbohydrate biosynthesis; D-glycero-D-manno-heptose 7-phosphate biosynthesis; D-glycero-alpha-D-manno-heptose 7-phosphate and D-glycero-beta-D-manno-heptose 7-phosphate from sedoheptulose 7-phosphate: step 1/1. Functionally, catalyzes the isomerization of sedoheptulose 7-phosphate in D-glycero-D-manno-heptose 7-phosphate. In Salmonella dublin (strain CT_02021853), this protein is Phosphoheptose isomerase.